Consider the following 663-residue polypeptide: Alcohol oxidase 1 (663 aa).

Asp-8–Glu-38 is an FAD binding site. His-567 acts as the Proton acceptor in catalysis. A Microbody targeting signal motif is present at residues Ala-661–Phe-663.

This sequence belongs to the GMC oxidoreductase family. In terms of assembly, homooctamer. FAD serves as cofactor.

Its subcellular location is the peroxisome matrix. It carries out the reaction a primary alcohol + O2 = an aldehyde + H2O2. Its pathway is energy metabolism; methane degradation. Its function is as follows. Major isoform of alcohol oxidase, which catalyzes the oxidation of methanol to formaldehyde and hydrogen peroxide, the first step in the methanol utilization pathway of methylotrophic yeasts. This chain is Alcohol oxidase 1 (AOX1), found in Komagataella phaffii (strain ATCC 76273 / CBS 7435 / CECT 11047 / NRRL Y-11430 / Wegner 21-1) (Yeast).